The chain runs to 195 residues: dTTP/UTP pyrophosphatase (195 aa).

Asp70 acts as the Proton acceptor in catalysis.

This sequence belongs to the Maf family. YhdE subfamily. A divalent metal cation is required as a cofactor.

The protein resides in the cytoplasm. It carries out the reaction dTTP + H2O = dTMP + diphosphate + H(+). It catalyses the reaction UTP + H2O = UMP + diphosphate + H(+). Nucleoside triphosphate pyrophosphatase that hydrolyzes dTTP and UTP. May have a dual role in cell division arrest and in preventing the incorporation of modified nucleotides into cellular nucleic acids. In Methanococcoides burtonii (strain DSM 6242 / NBRC 107633 / OCM 468 / ACE-M), this protein is dTTP/UTP pyrophosphatase.